A 179-amino-acid chain; its full sequence is MQTPVSVNEKKEFIRWFLNHYQLKRRECVWILNYLMSHDSLMEKVHFVEQAEFCPRGIIMSTHCVDEVPFRFYKENIMTTDAEKSFHDIRLNKQQDLFIQLNFRSAYRSPEYAAVLETNPHIPKDLYENEKDKDLAEKVLEHSIATFQKERLMKEIDEALDRHDQETFNKLARELSLLS.

It belongs to the UPF0302 family.

This Bacillus pumilus (strain SAFR-032) protein is UPF0302 protein BPUM_1989.